Here is an 83-residue protein sequence, read N- to C-terminus: Putative membrane protein insertion efficiency factor (83 aa).

A disordered region spans residues 63–83 (GGNDPVPDHFSLRRNKTDISD). The segment covering 68–83 (VPDHFSLRRNKTDISD) has biased composition (basic and acidic residues).

This sequence belongs to the UPF0161 family.

The protein resides in the cell membrane. Functionally, could be involved in insertion of integral membrane proteins into the membrane. In Streptococcus agalactiae serotype Ia (strain ATCC 27591 / A909 / CDC SS700), this protein is Putative membrane protein insertion efficiency factor.